A 364-amino-acid chain; its full sequence is Eukaryotic translation initiation factor 3 subunit H (364 aa).

Residues 13 to 162 (VQVDALVAIK…LRAYRLSPSF (150 aa)) enclose the MPN domain.

It belongs to the eIF-3 subunit H family. As to quaternary structure, component of the eukaryotic translation initiation factor 3 (eIF-3) complex.

The protein resides in the cytoplasm. Its function is as follows. Component of the eukaryotic translation initiation factor 3 (eIF-3) complex, which is involved in protein synthesis of a specialized repertoire of mRNAs and, together with other initiation factors, stimulates binding of mRNA and methionyl-tRNAi to the 40S ribosome. The eIF-3 complex specifically targets and initiates translation of a subset of mRNAs involved in cell proliferation. The sequence is that of Eukaryotic translation initiation factor 3 subunit H from Phaeosphaeria nodorum (strain SN15 / ATCC MYA-4574 / FGSC 10173) (Glume blotch fungus).